The following is a 336-amino-acid chain: TBC1 domain family member 21 (336 aa).

The Rab-GAP TBC domain maps to 57–265; the sequence is GLHPFVRTEA…RLWEVLLTGK (209 aa).

As to quaternary structure, interacts with ACTB. Interacts with ARMC12, TOMM20, DNAH7 and RAP1A. Interacts with RAB10. As to expression, expressed in round and elongated spermatids (at protein level). Expressed specifically in adult testis and very weakly in fetal brain.

It localises to the cytoplasmic vesicle. The protein resides in the secretory vesicle. Its subcellular location is the acrosome. The protein localises to the cytoplasm. It is found in the cytoskeleton. In terms of biological role, acts as a GTPase-activating protein for Rab family protein(s). Essential for the establishment of male fertility, and is required for both the production of normal sperm number and sperm function. Plays an important role in the formation of intact mitochondria, outer dense fibers and axoneme within the sperm tail. Essential for sperm mitochondrial sheath formation and for the interactions of ARMC12 with VDAC2 and VDAC3. May be involved in acrosome formation and cytoskeletal reorganization during spermiogenesis, possibly by regulating RAB3A activity. The polypeptide is TBC1 domain family member 21 (TBC1D21) (Homo sapiens (Human)).